We begin with the raw amino-acid sequence, 369 residues long: Dehydrogenase pigH (369 aa).

The Enoyl reductase (ER) domain maps to 13-367 (KAPLLEVKAA…QGVSAKKIVV (355 aa)). 44–49 (IDWLIQ) contacts NADP(+). N-linked (GlcNAc...) asparagine glycans are attached at residues N79 and N101. Residues 197–200 (SRKN) and Y215 each bind NADP(+). The helical transmembrane segment at 280 to 300 (TIIFFVSWIISFKFKGLLKGI) threads the bilayer. Residue 360–361 (VS) coordinates NADP(+).

The protein belongs to the zinc-containing alcohol dehydrogenase family.

It is found in the membrane. Its pathway is secondary metabolite biosynthesis. Its function is as follows. Dehydrogenase; part of the gene cluster that mediates the biosynthesis of azaphilone pigments (MonAzPs), a complex mixture of compounds with a common azaphilone skeleton very widely used as food colorants. Within the pathway, pigH might be involved in the late steps of yellow pigments monascin and ankaflavin biosynthesis. The first step of the pathway is performed by the nrPKS pigA that forms the hexaketide precursor from successive condensations of five malonyl-CoA units, with a simple acetyl-CoA starter unit. The role of esterase pigG is not clear, but it may play at most a supplementary role in the formation of the benzaldehyde produced by the pigA nrPKS. This very reactive benzaldehyde is intercepted by the pigC ketoreductase that to provide the first stable enzyme-free MonAzPs intermediate, 6-(4-hydroxy-2-oxopentyl)-3-methyl-2,4-dioxocyclohexane carbaldehyde, also known as M7PKS-1. The FAD-dependent monooxygenase pigN hydroxylates M7PKS-1 at C-4, which triggers the formation of the pyran ring. PigJ, pigK and pigD are involved in the acetylation of the pyran ring. PigJ and pigK form the two subunits of a dedicated fungal FAS that produces the side chain fatty acyl moiety of MonAzPs and pigD transfers the fatty acyl chain to the C-4 alcohol. PigM and pigO are involved in the elimination of the omega-1 alcohol. PigM acts as an O-acetyltransferase that synthesizes the putative O-11 acetyl intermediate whereas pigO eliminates acetic acid to yield an intermediate with a C10(11) double bond. The dehydration of the C-11 alcohol followed by the reduction of the C6(7) double bond by the NAD(P)H-dependent oxidoreductase pigE increases the electrophilicity of the C-5 ketone of the resulting acyl benzopyran. This in turn sets up the C-5 ketone for an intramolecular Knoevenagel aldol condensation with the C-20 enol of the side chain. This condensation affords the characteristic linear tricyclic carbon skeletons of the yellow pigments that serve as the common precursors for the classical yellow pigments monascin and ankaflavin, orange pigments rubopunctatin and monascorubrin, and red pigments ribropunctamine and monascorubramine. The FAD-dependent oxidoreductase pigF is especially invoved in the biosynthesis of orange and red pigments via desaturation of C6(7). The polypeptide is Dehydrogenase pigH (Monascus ruber (Mold)).